A 183-amino-acid polypeptide reads, in one-letter code: MTATAQQLEYLKNSIKSIQDYPKPGILFRDVTSLLEDPKAYALSIELLVERYKNAGITKVVGTEARGFLFGAPVALALGVGFVPVRKPRKLPRETIAESYELEYGTDQLEIHVDAIKPGDKVLVVDDLLATGGTIEATVKLIRRLGGEVTDAAFIINLFDIGGEERLNKQGITCYSLVPFPGH.

This sequence belongs to the purine/pyrimidine phosphoribosyltransferase family. As to quaternary structure, homodimer.

The protein resides in the cytoplasm. It catalyses the reaction AMP + diphosphate = 5-phospho-alpha-D-ribose 1-diphosphate + adenine. It functions in the pathway purine metabolism; AMP biosynthesis via salvage pathway; AMP from adenine: step 1/1. Its function is as follows. Catalyzes a salvage reaction resulting in the formation of AMP, that is energically less costly than de novo synthesis. This Cronobacter sakazakii (strain ATCC BAA-894) (Enterobacter sakazakii) protein is Adenine phosphoribosyltransferase.